We begin with the raw amino-acid sequence, 25 residues long: Caerin-1.10 (25 aa).

L25 bears the Leucine amide mark.

This sequence belongs to the frog skin active peptide (FSAP) family. Caerin subfamily. In terms of tissue distribution, expressed by the skin dorsal glands.

It localises to the secreted. Functionally, antibacterial peptide with wide spectrum of activity. The polypeptide is Caerin-1.10 (Litoria rothii (Roth's tree frog)).